The chain runs to 329 residues: Cytosolic arginine sensor for mTORC1 subunit 2 (329 aa).

ACT domains are found at residues 72 to 139 and 262 to 322; these read ADAT…MHTL and ELWK…NALQ.

The protein belongs to the GATS family. As to quaternary structure, may form homodimers and heterodimers.

It is found in the cytoplasm. It localises to the cytosol. Its function is as follows. Functions as a negative regulator of the TORC1 signaling pathway. The protein is Cytosolic arginine sensor for mTORC1 subunit 2 of Xenopus tropicalis (Western clawed frog).